Reading from the N-terminus, the 250-residue chain is Coproheme decarboxylase (250 aa).

Fe-coproporphyrin III-binding positions include arginine 131, 145–149, histidine 172, and glutamine 185; that span reads YPMNK. Tyrosine 145 is an active-site residue.

The protein belongs to the ChdC family. Type 1 subfamily. Requires Fe-coproporphyrin III as cofactor.

It catalyses the reaction Fe-coproporphyrin III + 2 H2O2 + 2 H(+) = heme b + 2 CO2 + 4 H2O. It carries out the reaction Fe-coproporphyrin III + H2O2 + H(+) = harderoheme III + CO2 + 2 H2O. The enzyme catalyses harderoheme III + H2O2 + H(+) = heme b + CO2 + 2 H2O. Its pathway is porphyrin-containing compound metabolism; protoheme biosynthesis. In terms of biological role, involved in coproporphyrin-dependent heme b biosynthesis. Catalyzes the decarboxylation of Fe-coproporphyrin III (coproheme) to heme b (protoheme IX), the last step of the pathway. The reaction occurs in a stepwise manner with a three-propionate intermediate. The sequence is that of Coproheme decarboxylase from Staphylococcus aureus (strain MRSA252).